We begin with the raw amino-acid sequence, 1013 residues long: Poly [ADP-ribose] polymerase 1 (1013 aa).

A2 carries the N-acetylalanine modification. Residues 9-93 form a PARP-type 1 zinc finger; sequence YRVQYAKSGR…KVKKTAEAGG (85 aa). Residues C21 and C24 each coordinate Zn(2+). Position 41 is a phosphoserine (S41). Residues H53 and C56 each coordinate Zn(2+). N6-acetyllysine is present on residues K97 and K105. The segment at 113–203 adopts a PARP-type 2 zinc-finger fold; sequence FAAEYAKSNR…ALKKQLPAIK (91 aa). C125 and C128 together coordinate Zn(2+). K131 carries the post-translational modification N6-acetyllysine. Zn(2+) contacts are provided by H159 and C162. A phosphoserine mark is found at S177, S179, and S185. K192 participates in a covalent cross-link: Glycyl lysine isopeptide (Lys-Gly) (interchain with G-Cter in SUMO2). The segment at 200-226 is disordered; sequence PAIKNEGKRKGDEVDGTDEVAKKKSRK. K203 is covalently cross-linked (Glycyl lysine isopeptide (Lys-Gly) (interchain with G-Cter in SUMO1); alternate). Residue K203 forms a Glycyl lysine isopeptide (Lys-Gly) (interchain with G-Cter in SUMO2); alternate linkage. Over residues 204 to 226 the composition is skewed to basic and acidic residues; the sequence is NEGKRKGDEVDGTDEVAKKKSRK. Short sequence motifs (nuclear localization signal) lie at residues 207 to 209 and 221 to 226; these read KRK and KKKSRK. A PADR1 zinc-binding domain is found at 225–359; that stretch reads RKETDKYSKL…VKKQDRIFPP (135 aa). K249 participates in a covalent cross-link: Glycyl lysine isopeptide (Lys-Gly) (interchain with G-Cter in SUMO2). Phosphoserine is present on residues S274 and S277. Residues 290 to 332 form a zinc ribbon region; sequence GALLPCKECSGQLVFKSDAYYCTGDVTAWTKCMVKTQNPSRKE. Zn(2+)-binding residues include C295, C298, C311, and C321. An automodification domain region spans residues 373–523; it reads VTSAPTAVNS…GVNKSEKRMK (151 aa). In terms of domain architecture, BRCT spans 385 to 476; the sequence is PADKPLSNMK…KSLQDLLSAH (92 aa). D387 is modified (polyADP-ribosyl aspartic acid). Residues E407, E413, E435, E437, E444, E445, E448, and E456 each carry the polyADP-ribosyl glutamic acid modification. Residue K467 forms a Glycyl lysine isopeptide (Lys-Gly) (interchain with G-Cter in SUMO2) linkage. Residue E484 is modified to PolyADP-ribosyl glutamic acid. K486 is covalently cross-linked (Glycyl lysine isopeptide (Lys-Gly) (interchain with G-Cter in SUMO1); alternate). A Glycyl lysine isopeptide (Lys-Gly) (interchain with G-Cter in SUMO2); alternate cross-link involves residue K486. E488 and E491 each carry polyADP-ribosyl glutamic acid. The disordered stretch occupies residues 489–508; the sequence is PGEVVAPRGKSAAPSKKSKG. The span at 494–503 shows a compositional bias: low complexity; the sequence is APRGKSAAPS. ADP-ribosylserine is present on residues S499, S503, and S506. Residue K511 forms a Glycyl lysine isopeptide (Lys-Gly) (interchain with G-Cter in SUMO2) linkage. PolyADP-ribosyl glutamic acid occurs at positions 512 and 513. S518 is subject to ADP-ribosylserine. The residue at position 519 (E519) is a PolyADP-ribosyl glutamic acid. K520 carries the post-translational modification N6-(ADP-ribosyl)lysine. K527 is covalently cross-linked (Glycyl lysine isopeptide (Lys-Gly) (interchain with G-Cter in SUMO2)). Residues 541–637 enclose the WGR domain; it reads SAHVLEKGGK…KNFTKYPKKF (97 aa). T593 is modified (phosphothreonine). 2 positions are modified to N6-acetyllysine: K599 and K620. The 118-residue stretch at 661–778 folds into the PARP alpha-helical domain; it reads KSKLPKPVQE…DIEVAYSLLR (118 aa). A Glycyl lysine isopeptide (Lys-Gly) (interchain with G-Cter in SUMO1); alternate cross-link involves residue K747. Residue K747 forms a Glycyl lysine isopeptide (Lys-Gly) (interchain with G-Cter in SUMO2); alternate linkage. Phosphoserine is present on residues S781 and S785. In terms of domain architecture, PARP catalytic spans 787–1013; the sequence is DPIDVNYEKL…LKFNFKTSLW (227 aa). NAD(+)-binding positions include 861–863, G870, R877, and S903; that span reads HGS. Residue E987 is the For poly [ADP-ribose] polymerase activity of the active site.

It belongs to the ARTD/PARP family. Homodimer; PARP-type zinc-fingers from separate PARP1 molecules form a dimer module that specifically recognizes DNA strand breaks. Heterodimer; heterodimerizes with PARP2. Interacts (via the PARP catalytic domain) with HPF1. Interacts with NMNAT1. Interacts with nucleosomes; with a preference for nucleosomes containing H2A.X. Interacts with APTX. Component of a base excision repair (BER) complex, containing at least XRCC1, PARP1, PARP2, POLB and LRIG3. Interacts with SRY. The SWAP complex consists of NPM1, NCL, PARP1 and SWAP70. Interacts with TIAM2. Interacts with PARP3; leading to activate PARP1 in absence of DNA. Interacts (when poly-ADP-ribosylated) with CHD1L (via macro domain). Interacts with the DNA polymerase alpha catalytic subunit POLA1; this interaction functions as part of the control of replication fork progression. Interacts with EEF1A1 and TXK. Interacts with RNF4. Interacts with RNF146. Interacts with ZNF423. Interacts with APLF. Interacts with SNAI1 (via zinc fingers); the interaction requires SNAI1 to be poly-ADP-ribosylated and non-phosphorylated (active) by GSK3B. Interacts (when poly-ADP-ribosylated) with PARP9. Interacts with NR4A3; activates PARP1 by improving acetylation of PARP1 and suppressing the interaction between PARP1 and SIRT1. Interacts (via catalytic domain) with PUM3; the interaction inhibits the poly-ADP-ribosylation activity of PARP1 and the degradation of PARP1 by CASP3 following genotoxic stress. Interacts with ZNF365. Interacts with RRP1B. Interacts with TIMELESS; the interaction is direct. Interacts with CGAS; leading to impede the formation of the PARP1-TIMELESS complex. Interacts with KHDC3L, the interaction is increased following the formation of DNA double-strand breaks. Interacts (when auto-poly-ADP-ribosylated) with XRCC1; leading to inhibit PARP1 ADP-ribosyltransferase activity. Interacts with SPINDOC; promoting PARP1 ADP-ribosyltransferase activity. Interacts with BANF1; leading to inhibit PARP1 ADP-ribosyltransferase activity in response to oxidative DNA damage. Interacts (when sumoylated and ubiquitinated) with VCP/p97; leading to its extraction from chromatin. Interacts with YARS1; promoting PARP1 ADP-ribosyltransferase activity. Interacts with PACMP micropeptide; Interacts with PACMP micropeptide; interaction. Interacts (when poly-ADP-ribosylated) with isoform 1 of MACROH2A1; MACROH2A1 specifically binds to poly-ADP-ribose chains and inhibits PARP1 activity, limiting the consumption of nuclear NAD(+). Interacts with CARM1; promoting recruitment to replication forks. Interacts with RECQL. Interacts with ZNF32; the interaction reshapes ZNF432 interacting proteins. Interacts with TPRN; TPRN interacts with a number of DNA damage response proteins, is recruited to sites of DNA damage and may play a role in DNA damage repair. In terms of assembly, interacts (when auto-poly-ADP-ribosylated) with AIFM1. Post-translationally, poly-ADP-ribosylated on serine, glutamate and aspartate residues by autocatalysis. Auto-ADP-ribosylation on serine takes place following interaction with HPF1. Auto poly-ADP-ribosylation on serine residues promotes its dissociation from chromatin. Poly-ADP-ribosylated by PARP2; poly-ADP-ribosylation mediates the recruitment of CHD1L to DNA damage sites. Mono-ADP-ribosylated at Lys-520 by SIRT6 in response to oxidative stress, promoting recruitment to double-strand breaks (DSBs) sites. S-nitrosylated, leading to inhibit transcription regulation activity. In terms of processing, phosphorylated at Thr-593 by PRKDC in response to DNA damage following virus infection, promoting its translocation to the cytosol. Phosphorylated by TXK. Post-translationally, proteolytically cleaved by caspase-3 (CASP3) and caspase-7 (CASP7) in response to apoptosis to generate the Poly [ADP-ribose] polymerase 1, processed N-terminus and Poly [ADP-ribose] polymerase 1, processed C-terminus forms. Sumoylated with SUMO1 or SUMO2 by PIAS4 following prolonged residence (trapping) to chromatin. Sumoylation promotes ubiquitination by RNF4 and removal from chromatin by VCP/p97. In terms of processing, ubiquitinated by RNF4 following sumoylation by PIAS4 in response to prolonged residence (trapping) to chromatin. Ubiquitination promotes removal from chromatin by VCP/p97. In terms of tissue distribution, widely expressed. Expression is correlated with proliferation, with higher levels occurring during early fetal development and organogenesis and in the highly proliferative cell compartments of adult. Expressed in B-cells that have been induced to switch to various Ig isotypes.

The protein resides in the chromosome. Its subcellular location is the nucleus. It is found in the nucleolus. The protein localises to the cytoplasm. It localises to the cytosol. The enzyme catalyses NAD(+) + (ADP-D-ribosyl)n-acceptor = nicotinamide + (ADP-D-ribosyl)n+1-acceptor + H(+).. The catalysed reaction is L-seryl-[protein] + NAD(+) = O-(ADP-D-ribosyl)-L-seryl-[protein] + nicotinamide + H(+). It catalyses the reaction L-aspartyl-[protein] + NAD(+) = 4-O-(ADP-D-ribosyl)-L-aspartyl-[protein] + nicotinamide. It carries out the reaction L-glutamyl-[protein] + NAD(+) = 5-O-(ADP-D-ribosyl)-L-glutamyl-[protein] + nicotinamide. The enzyme catalyses L-tyrosyl-[protein] + NAD(+) = O-(ADP-D-ribosyl)-L-tyrosyl-[protein] + nicotinamide + H(+). The catalysed reaction is L-histidyl-[protein] + NAD(+) = N(tele)-(ADP-D-ribosyl)-L-histidyl-[protein] + nicotinamide + H(+). ADP-ribosyltransferase activity is regulated via an allosteric activation mechanism. In absence of activation signal, PARP1 is autoinhibited by the PARP alpha-helical domain (also named HD region), which prevents effective NAD(+)-binding. Activity is highly stimulated by signals, such as DNA strand breaks. Binding to damaged DNA unfolds the PARP alpha-helical domain, relieving autoinhibition. Poly-ADP-ribosyltransferase activity is tightly regulated and PARP1 is removed from damaged chromatin following initial poly-ADP-ribosylation of chromatin to avoid prolonged residence (trapping) that has cytotoxic consequences. A number of factors (VCP/p97) or post-translational modifications (auto-poly-ADP-ribosylation or ubiquitination) promote PARP1 removal from chromatin. Poly-ADP-ribosyltransferase that mediates poly-ADP-ribosylation of proteins and plays a key role in DNA repair. Mediates glutamate, aspartate, serine, histidine or tyrosine ADP-ribosylation of proteins: the ADP-D-ribosyl group of NAD(+) is transferred to the acceptor carboxyl group of target residues and further ADP-ribosyl groups are transferred to the 2'-position of the terminal adenosine moiety, building up a polymer with an average chain length of 20-30 units. Serine ADP-ribosylation of proteins constitutes the primary form of ADP-ribosylation of proteins in response to DNA damage. Specificity for the different amino acids is conferred by interacting factors, such as HPF1 and NMNAT1. Following interaction with HPF1, catalyzes serine ADP-ribosylation of target proteins; HPF1 confers serine specificity by completing the PARP1 active site. Also catalyzes tyrosine ADP-ribosylation of target proteins following interaction with HPF1. Following interaction with NMNAT1, catalyzes glutamate and aspartate ADP-ribosylation of target proteins; NMNAT1 confers glutamate and aspartate specificity. PARP1 initiates the repair of DNA breaks: recognizes and binds DNA breaks within chromatin and recruits HPF1, licensing serine ADP-ribosylation of target proteins, such as histones (H2BS6ADPr and H3S10ADPr), thereby promoting decompaction of chromatin and the recruitment of repair factors leading to the reparation of DNA strand breaks. HPF1 initiates serine ADP-ribosylation but restricts the polymerase activity of PARP1 in order to limit the length of poly-ADP-ribose chains. In addition to base excision repair (BER) pathway, also involved in double-strand breaks (DSBs) repair: together with TIMELESS, accumulates at DNA damage sites and promotes homologous recombination repair by mediating poly-ADP-ribosylation. Mediates the poly-ADP-ribosylation of a number of proteins, including itself, APLF, CHFR and NFAT5. In addition to proteins, also able to ADP-ribosylate DNA: catalyzes ADP-ribosylation of DNA strand break termini containing terminal phosphates and a 2'-OH group in single- and double-stranded DNA, respectively. Required for PARP9 and DTX3L recruitment to DNA damage sites. PARP1-dependent PARP9-DTX3L-mediated ubiquitination promotes the rapid and specific recruitment of 53BP1/TP53BP1, UIMC1/RAP80, and BRCA1 to DNA damage sites. PARP1-mediated DNA repair in neurons plays a role in sleep: senses DNA damage in neurons and promotes sleep, facilitating efficient DNA repair. In addition to DNA repair, also involved in other processes, such as transcription regulation, programmed cell death, membrane repair, adipogenesis and innate immunity. Acts as a repressor of transcription: binds to nucleosomes and modulates chromatin structure in a manner similar to histone H1, thereby altering RNA polymerase II. Acts both as a positive and negative regulator of transcription elongation, depending on the context. Acts as a positive regulator of transcription elongation by mediating poly-ADP-ribosylation of NELFE, preventing RNA-binding activity of NELFE and relieving transcription pausing. Acts as a negative regulator of transcription elongation in response to DNA damage by catalyzing poly-ADP-ribosylation of CCNT1, disrupting the phase separation activity of CCNT1 and subsequent activation of CDK9. Involved in replication fork progression following interaction with CARM1: mediates poly-ADP-ribosylation at replication forks, slowing fork progression. Poly-ADP-ribose chains generated by PARP1 also play a role in poly-ADP-ribose-dependent cell death, a process named parthanatos. Also acts as a negative regulator of the cGAS-STING pathway. Acts by mediating poly-ADP-ribosylation of CGAS: PARP1 translocates into the cytosol following phosphorylation by PRKDC and catalyzes poly-ADP-ribosylation and inactivation of CGAS. Acts as a negative regulator of adipogenesis: catalyzes poly-ADP-ribosylation of histone H2B on 'Glu-35' (H2BE35ADPr) following interaction with NMNAT1, inhibiting phosphorylation of H2B at 'Ser-36' (H2BS36ph), thereby blocking expression of pro-adipogenetic genes. Involved in the synthesis of ATP in the nucleus, together with NMNAT1, PARG and NUDT5. Nuclear ATP generation is required for extensive chromatin remodeling events that are energy-consuming. In terms of biological role, promotes AIFM1-mediated apoptosis. This form, which translocates into the cytoplasm following cleavage by caspase-3 (CASP3) and caspase-7 (CASP7) in response to apoptosis, is auto-poly-ADP-ribosylated and serves as a poly-ADP-ribose carrier to induce AIFM1-mediated apoptosis. Its function is as follows. This cleavage form irreversibly binds to DNA breaks and interferes with DNA repair, promoting DNA damage-induced apoptosis. The sequence is that of Poly [ADP-ribose] polymerase 1 (Parp1) from Mus musculus (Mouse).